Here is a 200-residue protein sequence, read N- to C-terminus: MGITRDSRHKRSATGAKRAQYRKKRKFELGRQPSNTRIGPKRIHEVRVRGGNKKFRALRLDSGNFSWGSEGVSKKTRIIQVAYHPSNNELVRTNTLTKSAIVQIDAAPFRVWYETHYGILMGSKGKKATATPTPKSKHVQRKHSARLGDSKVDSALETQFAAGRLYAVVSSRPGQSGRCDGYILEGEELHFYLRRMAPKK.

Residues M1–K41 form a disordered region. S62 and S99 each carry phosphoserine. The tract at residues K124–A145 is disordered. Over residues K135–A145 the composition is skewed to basic residues. Phosphoserine is present on residues S150, S154, and S171.

This sequence belongs to the eukaryotic ribosomal protein eS8 family. In terms of assembly, component of the small ribosomal subunit (SSU). Mature yeast ribosomes consist of a small (40S) and a large (60S) subunit. The 40S small subunit contains 1 molecule of ribosomal RNA (18S rRNA) and at least 33 different proteins. The large 60S subunit contains 3 rRNA molecules (25S, 5.8S and 5S rRNA) and at least 46 different proteins.

Its subcellular location is the cytoplasm. Component of the ribosome, a large ribonucleoprotein complex responsible for the synthesis of proteins in the cell. The small ribosomal subunit (SSU) binds messenger RNAs (mRNAs) and translates the encoded message by selecting cognate aminoacyl-transfer RNA (tRNA) molecules. The large subunit (LSU) contains the ribosomal catalytic site termed the peptidyl transferase center (PTC), which catalyzes the formation of peptide bonds, thereby polymerizing the amino acids delivered by tRNAs into a polypeptide chain. The nascent polypeptides leave the ribosome through a tunnel in the LSU and interact with protein factors that function in enzymatic processing, targeting, and the membrane insertion of nascent chains at the exit of the ribosomal tunnel. The chain is Small ribosomal subunit protein eS8B (rps802) from Schizosaccharomyces pombe (strain 972 / ATCC 24843) (Fission yeast).